A 233-amino-acid chain; its full sequence is Probable chemoreceptor glutamine deamidase CheD (233 aa).

It belongs to the CheD family.

It catalyses the reaction L-glutaminyl-[protein] + H2O = L-glutamyl-[protein] + NH4(+). Its function is as follows. Probably deamidates glutamine residues to glutamate on methyl-accepting chemotaxis receptors (MCPs), playing an important role in chemotaxis. This Vibrio cholerae serotype O1 (strain ATCC 39315 / El Tor Inaba N16961) protein is Probable chemoreceptor glutamine deamidase CheD.